Here is a 152-residue protein sequence, read N- to C-terminus: Nucleoside diphosphate kinase B (152 aa).

Residues 1–66 (MANLERTFIA…DRPFFPGLVK (66 aa)) form an interaction with AKAP13 region. 6 residues coordinate ATP: Lys-12, Phe-60, Arg-88, Thr-94, Arg-105, and Asn-115. His-118 acts as the Pros-phosphohistidine intermediate in catalysis.

It belongs to the NDK family. As to quaternary structure, hexamer of two different chains: An and B (A6, A5B, A4B2, A3B3, A2B4, AB5, B6). Interacts with CAPN8. Interacts with AKAP13. Interacts with ITGB1BP1 (via C-terminal domain region). Interacts with BCL2L10. It depends on Mg(2+) as a cofactor.

It localises to the cytoplasm. Its subcellular location is the cell projection. It is found in the lamellipodium. The protein resides in the ruffle. The protein localises to the nucleus. It carries out the reaction a 2'-deoxyribonucleoside 5'-diphosphate + ATP = a 2'-deoxyribonucleoside 5'-triphosphate + ADP. The catalysed reaction is a ribonucleoside 5'-diphosphate + ATP = a ribonucleoside 5'-triphosphate + ADP. The enzyme catalyses ATP + protein L-histidine = ADP + protein N-phospho-L-histidine.. Its function is as follows. Major role in the synthesis of nucleoside triphosphates other than ATP. The ATP gamma phosphate is transferred to the NDP beta phosphate via a ping-pong mechanism, using a phosphorylated active-site intermediate. Negatively regulates Rho activity by interacting with AKAP13/LBC. Acts as a transcriptional activator of the MYC gene; binds DNA non-specifically. Binds to both single-stranded guanine- and cytosine-rich strands within the nuclease hypersensitive element (NHE) III(1) region of the MYC gene promoter. Does not bind to duplex NHE III(1). Has G-quadruplex (G4) DNA-binding activity, which is independent of its nucleotide-binding and kinase activity. Binds both folded and unfolded G4 with similar low nanomolar affinities. Stabilizes folded G4s regardless of whether they are prefolded or not. Exhibits histidine protein kinase activity. In Pongo abelii (Sumatran orangutan), this protein is Nucleoside diphosphate kinase B (NME2).